The sequence spans 352 residues: MGSCINEEKLAKFFQRSLNALPAPYTSGLPNHLSLIFFVVSGLDLLNKTDILEKEKQDIINWVYSRQILPSKDNPEINLENCGFRGYNFLGQEFCCDKSVHTSENGPLEYDLPSTPNTYCALLILRILGDDFSGVNKKAIIDSLRKRQRESDGAISGSPNVGDYDLRHLFSACAISFILDDWSAINKESAIDYIKSCLSYEFAFGQTPQQEAHGGPTYCAIASLSLLGRLDVLEPFKEQLTFWLVKKQITGFCGRTNKDPDTCYAFWIGASLMMIDRYDLIDFASINAFIGSAQHEAIGGVAKEPGQLPDVMHSYLSLVGLSFGNIPSIQQVIPCLNLSKRAAGKDWFEKLI.

PFTB repeat units follow at residues 135 to 180, 187 to 228, 236 to 276, and 283 to 325; these read VNKK…FILD, KESA…SLLG, FKEQ…MMID, and FASI…SFGN. Residues 213–215 and 255–258 contribute to the geranylgeranyl diphosphate site; these read HGG and RTNK. Residues Asp261 and Cys263 each contribute to the Zn(2+) site. 264 to 267 is a geranylgeranyl diphosphate binding site; sequence YAFW. His313 contacts Zn(2+).

The protein belongs to the protein prenyltransferase subunit beta family. As to quaternary structure, heterodimer of an alpha and a beta subunit. Requires Zn(2+) as cofactor. The cofactor is Mg(2+).

It catalyses the reaction geranylgeranyl diphosphate + L-cysteinyl-[protein] = S-geranylgeranyl-L-cysteinyl-[protein] + diphosphate. Catalyzes the transfer of a geranyl-geranyl moiety from geranyl-geranyl pyrophosphate to a cysteine at the fourth position from the C-terminus of proteins having the C-terminal sequence Cys-aliphatic-aliphatic-X. The polypeptide is Geranylgeranyl transferase type-1 subunit beta (pggt1b) (Dictyostelium discoideum (Social amoeba)).